Consider the following 220-residue polypeptide: UPF0441 protein Spro_4274 (220 aa).

The segment at 181–220 (MAPKPAVTNTVTRGGFGESVAKQTSMQRSSATSSSRSMGG) is disordered. Low complexity predominate over residues 203–220 (QTSMQRSSATSSSRSMGG).

This sequence belongs to the UPF0441 family.

The sequence is that of UPF0441 protein Spro_4274 from Serratia proteamaculans (strain 568).